A 147-amino-acid polypeptide reads, in one-letter code: Large ribosomal subunit protein uL13 (147 aa).

Belongs to the universal ribosomal protein uL13 family. In terms of assembly, part of the 50S ribosomal subunit.

Functionally, this protein is one of the early assembly proteins of the 50S ribosomal subunit, although it is not seen to bind rRNA by itself. It is important during the early stages of 50S assembly. This is Large ribosomal subunit protein uL13 from Paenarthrobacter aurescens (strain TC1).